Consider the following 715-residue polypeptide: Myosin light chain kinase 3 (715 aa).

The disordered stretch occupies residues 67 to 114 (VTLPNDPSSQHSPEAHTGASEPLKPVSAGESSKALQKAKEISVKSSEP). Residues 404-659 (VNPVEVLGGG…ASGCMKHSWL (256 aa)) enclose the Protein kinase domain. Residues 410-418 (LGGGRFGQV) and Lys-433 contribute to the ATP site. The active-site Proton acceptor is Asp-525.

The protein belongs to the protein kinase superfamily. CAMK Ser/Thr protein kinase family. It depends on Mg(2+) as a cofactor. Post-translationally, phosphorylated on serine residues.

The protein resides in the cytoplasm. It carries out the reaction L-seryl-[myosin light chain] + ATP = O-phospho-L-seryl-[myosin light chain] + ADP + H(+). The catalysed reaction is L-threonyl-[myosin light chain] + ATP = O-phospho-L-threonyl-[myosin light chain] + ADP + H(+). In terms of biological role, kinase that phosphorylates MYL2 in vitro. Increases cardiomyocyte contractility. Required for sarcomere formation in the developing heart. The chain is Myosin light chain kinase 3 (mylk3) from Danio rerio (Zebrafish).